The chain runs to 309 residues: GTP cyclohydrolase MptA (309 aa).

The protein belongs to the GTP cyclohydrolase IV family. Homodimer. It depends on Fe(2+) as a cofactor.

It carries out the reaction GTP + H2O = 7,8-dihydroneopterin 2',3'-cyclic phosphate + formate + diphosphate + H(+). Its pathway is cofactor biosynthesis; 5,6,7,8-tetrahydromethanopterin biosynthesis. Functionally, converts GTP to 7,8-dihydro-D-neopterin 2',3'-cyclic phosphate, the first intermediate in the biosynthesis of coenzyme methanopterin. The polypeptide is GTP cyclohydrolase MptA (Haloarcula marismortui (strain ATCC 43049 / DSM 3752 / JCM 8966 / VKM B-1809) (Halobacterium marismortui)).